The sequence spans 500 residues: Glycerol kinase (500 aa).

An ADP-binding site is contributed by T16. 2 residues coordinate ATP: T16 and T17. Residue T16 coordinates sn-glycerol 3-phosphate. Position 20 (R20) interacts with ADP. Residues R86, E87, Y138, and D247 each coordinate sn-glycerol 3-phosphate. Residues R86, E87, Y138, D247, and Q248 each coordinate glycerol. T269 and G312 together coordinate ADP. ATP-binding residues include T269, G312, Q316, and G413. Residues G413 and N417 each contribute to the ADP site.

Belongs to the FGGY kinase family.

The catalysed reaction is glycerol + ATP = sn-glycerol 3-phosphate + ADP + H(+). It functions in the pathway polyol metabolism; glycerol degradation via glycerol kinase pathway; sn-glycerol 3-phosphate from glycerol: step 1/1. Inhibited by fructose 1,6-bisphosphate (FBP). In terms of biological role, key enzyme in the regulation of glycerol uptake and metabolism. Catalyzes the phosphorylation of glycerol to yield sn-glycerol 3-phosphate. This is Glycerol kinase from Rippkaea orientalis (strain PCC 8801 / RF-1) (Cyanothece sp. (strain PCC 8801)).